The following is a 437-amino-acid chain: MFERDIVATDNNKAVLHYPGGEFEMDIIEASEGNNGVVLGKMLSETGLITFDPGYVSTGSTESKITYIDGDAGILRYRGYDIADLAENATFNEVSYLLINGELPTPDELHKFNDEIRHHTLLDEDFKSQFNVFPRDAHPMATLASSVNILSTYYQDQLNPLDEAQLDKATVRLMAKVPMLAAYAHRARKGAPYMYPDNSLNARENFLRMMFGYPTEPYEIDPIMVKALDKLLILHADHEQNCSTSTVRMIGSAQANMFVSIAGGINALSGPLHGGANQAVLEMLEDIKSNHGGDATEFMNKVKNKEDGVRLMGFGHRVYKNYDPRAAIVKETAHEILEHLGGDDLLDLAIKLEEIALADDYFISRKLYPNVDFYTGLIYRAMGFPTDFFTVLFAIGRLPGWIAHYREQLGAAGNKINRPRQVYTGNESRKLVPREER.

Active-site residues include His-316 and Asp-372.

This sequence belongs to the citrate synthase family. Homohexamer.

The enzyme catalyses oxaloacetate + acetyl-CoA + H2O = citrate + CoA + H(+). It participates in carbohydrate metabolism; tricarboxylic acid cycle; isocitrate from oxaloacetate: step 1/2. Weakly inhibited by ATP (apparent Ki = 10 mm). This is Citrate synthase (gltA) from Corynebacterium glutamicum (strain ATCC 13032 / DSM 20300 / JCM 1318 / BCRC 11384 / CCUG 27702 / LMG 3730 / NBRC 12168 / NCIMB 10025 / NRRL B-2784 / 534).